Here is a 406-residue protein sequence, read N- to C-terminus: Type IV pilus assembly protein PilC (406 aa).

4 helical membrane passes run 69–91, 171–191, 211–231, and 377–397; these read IFSRQLATMLGAGLTLLQALAIL, YPVIVFVFAVGVAYFLLTGIV, FLIAVSDLLRAATLPLLLLAV, and MIIFLGVIVGMIVAGMFLPLF.

Belongs to the GSP F family. Homotetramer. Interacts with PilB.

The protein localises to the cell inner membrane. Its function is as follows. Essential inner membrane component of the type IV pilus (T4P) that plays a role in surface and host cell adhesion, colonization, biofilm maturation, virulence, and twitching, a form of surface-associated motility facilitated by cycles of extension, adhesion, and retraction of T4P fibers. Controls both pilus assembly and disassembly and plays an important role in PilB localization to the complex and ATPase activity. This is Type IV pilus assembly protein PilC from Thermus thermophilus (strain ATCC 27634 / DSM 579 / HB8).